The primary structure comprises 222 residues: MINTKKEEGEEEKTMIKRGLFILFEGVDRVGKSTQVQSLTNHISNVQKLPTKSLRFPDRTTPIGQIINQYLQNATNMDDRALHLLFSSNRWEARDSILELLNNGTNIVVDRYSYSGVAYSAAKGIDFDWCYACEKGLPKPDLIFYLSMSSEDATKRGEYGGERYEKLEFQKKIKQIYEEKLVDDQWKIINANRSIDEISNEISSIFDSEFKKIQLTSIAKLE.

ATP contacts are provided by residues 29-34 and arginine 111; that span reads RVGKST. Positions 146-170 are LID; it reads LSMSSEDATKRGEYGGERYEKLEFQ.

The protein belongs to the thymidylate kinase family. As to quaternary structure, homodimer. The cofactor is Mg(2+).

It carries out the reaction dTMP + ATP = dTDP + ADP. Its pathway is pyrimidine metabolism; dTTP biosynthesis. Catalyzes the phosphorylation of thymidine monophosphate (dTMP) to thymidine diphosphate (dTDP), the immediate precursor for the DNA building block dTTP, with ATP as the preferred phosphoryl donor in the presence of Mg(2+). This is Thymidylate kinase (dtymk) from Dictyostelium discoideum (Social amoeba).